A 208-amino-acid chain; its full sequence is GTP-binding protein Rho1 (208 aa).

Position 19–26 (19–26) interacts with GTP; sequence GDGACGKT. The Effector region motif lies at 41-49; that stretch reads YVPTVFDNY. GTP contacts are provided by residues 66 to 70 and 124 to 127; these read DTAGQ and CKAD. The segment at 188-208 is disordered; sequence GKQGKSKPKTKSSKKKKCVVL. Residues 191–208 are compositionally biased toward basic residues; sequence GKSKPKTKSSKKKKCVVL. Cysteine methyl ester is present on Cys-205. Cys-205 is lipidated: S-geranylgeranyl cysteine. Residues 206 to 208 constitute a propeptide, removed in mature form; that stretch reads VVL.

The protein belongs to the small GTPase superfamily. Rho family.

The protein resides in the cell membrane. The polypeptide is GTP-binding protein Rho1 (RHO1) (Kluyveromyces lactis (strain ATCC 8585 / CBS 2359 / DSM 70799 / NBRC 1267 / NRRL Y-1140 / WM37) (Yeast)).